The primary structure comprises 115 residues: Ribonuclease P protein component (115 aa).

It belongs to the RnpA family. Consists of a catalytic RNA component (M1 or rnpB) and a protein subunit.

The catalysed reaction is Endonucleolytic cleavage of RNA, removing 5'-extranucleotides from tRNA precursor.. Functionally, RNaseP catalyzes the removal of the 5'-leader sequence from pre-tRNA to produce the mature 5'-terminus. It can also cleave other RNA substrates such as 4.5S RNA. The protein component plays an auxiliary but essential role in vivo by binding to the 5'-leader sequence and broadening the substrate specificity of the ribozyme. The protein is Ribonuclease P protein component of Blochmanniella pennsylvanica (strain BPEN).